A 929-amino-acid polypeptide reads, in one-letter code: Pyruvate dehydrogenase E1 component (929 aa).

An Isoglutamyl lysine isopeptide (Lys-Gln) (interchain with Q-Cter in protein Pup) cross-link involves residue Lys375.

Homodimer. Part of the PDH complex, consisting of multiple copies of AceE (E1), DlaT (E2) and Lpd (E3). Mg(2+) is required as a cofactor. It depends on thiamine diphosphate as a cofactor.

The enzyme catalyses N(6)-[(R)-lipoyl]-L-lysyl-[protein] + pyruvate + H(+) = N(6)-[(R)-S(8)-acetyldihydrolipoyl]-L-lysyl-[protein] + CO2. Component of the pyruvate dehydrogenase (PDH) complex, that catalyzes the overall conversion of pyruvate to acetyl-CoA and CO(2). AceE has reductase activity with pyruvate but does not react with 2-oxoglutarate. The sequence is that of Pyruvate dehydrogenase E1 component (aceE) from Mycolicibacterium smegmatis (strain ATCC 700084 / mc(2)155) (Mycobacterium smegmatis).